Consider the following 46-residue polypeptide: Short transmembrane mitochondrial protein 1 (46 aa).

A helical membrane pass occupies residues Gly7–Glu23.

Belongs to the STMP1 family. Widely expressed. Expressed more abundantly in brain compared with other tissues such as heart, muscle and liver.

The protein localises to the mitochondrion inner membrane. It localises to the mitochondrion outer membrane. It is found in the mitochondrion intermembrane space. Microprotein involved in mitochondrial respiratory chain complex III (ubiquinol-cytochrome c oxidoreductase) and complex IV (mitochondrial cytochrome c oxidase complex) assembly. Required for the formation of mitochondrial supercomplexes (SCs). Also required for the activation of the NLRP3 inflammasome. The chain is Short transmembrane mitochondrial protein 1 from Danio rerio (Zebrafish).